A 113-amino-acid chain; its full sequence is uncharacterized protein (113 aa).

The protein to H.pylori HP0245/JHP0230.

This is an uncharacterized protein from Campylobacter jejuni subsp. jejuni serotype O:2 (strain ATCC 700819 / NCTC 11168).